Consider the following 513-residue polypeptide: GMP synthase [glutamine-hydrolyzing] (513 aa).

Residues 3–200 form the Glutamine amidotransferase type-1 domain; that stretch reads SVLVLDFGSQ…LLNIAGITPD (198 aa). The active-site Nucleophile is Cys-80. Catalysis depends on residues His-174 and Glu-176. One can recognise a GMPS ATP-PPase domain in the interval 201 to 388; that stretch reads WSSKSFIDHQ…LGIAEDILMR (188 aa). Residue 228-234 participates in ATP binding; the sequence is SGGVDST.

As to quaternary structure, homodimer.

It carries out the reaction XMP + L-glutamine + ATP + H2O = GMP + L-glutamate + AMP + diphosphate + 2 H(+). Its pathway is purine metabolism; GMP biosynthesis; GMP from XMP (L-Gln route): step 1/1. Functionally, catalyzes the synthesis of GMP from XMP. This chain is GMP synthase [glutamine-hydrolyzing], found in Chlorobium phaeovibrioides (strain DSM 265 / 1930) (Prosthecochloris vibrioformis (strain DSM 265)).